Here is a 286-residue protein sequence, read N- to C-terminus: Aquaporin PIP1-1 (286 aa).

At Met1 the chain carries N-acetylmethionine. The interval 1–34 (MEGKEEDVRVGANKFPERQPIGTSAQSDKDYKEP) is disordered. Residues 1 to 54 (MEGKEEDVRVGANKFPERQPIGTSAQSDKDYKEPPPAPFFEPGELSSWSFWRAG) are Cytoplasmic-facing. A helical membrane pass occupies residues 55–75 (IAEFIATFLFLYITVLTVMGV). The Extracellular segment spans residues 76 to 91 (KRSPNMCASVGIQGIA). The chain crosses the membrane as a helical span at residues 92 to 112 (WAFGGMIFALVYCTAGISGGH). At 113–132 (INPAVTFGLFLARKLSLTRA) the chain is on the cytoplasmic side. The short motif at 114–116 (NPA) is the NPA 1 element. The chain crosses the membrane as a helical span at residues 133 to 153 (LYYIVMQCLGAICGAGVVKGF). Residues 154–174 (QPKQYQALGGGANTVAHGYTK) lie on the Extracellular side of the membrane. The chain crosses the membrane as a helical span at residues 175–195 (GSGLGAEIIGTFVLVYTVFSA). The Cytoplasmic segment spans residues 196-208 (TDAKRNARDSHVP). A helical membrane pass occupies residues 209–229 (ILAPLPIGFAVFLVHLATIPI). The Extracellular segment spans residues 230–256 (TGTGINPARSLGAAIIYNKDHSWDDHW). The NPA 2 motif lies at 235–237 (NPA). The helical transmembrane segment at 257-277 (VFWVGPFIGAALAALYHVVVI) threads the bilayer. Residues 278–286 (RAIPFKSRS) lie on the Cytoplasmic side of the membrane. At Ser284 the chain carries Phosphoserine.

It belongs to the MIP/aquaporin (TC 1.A.8) family. PIP (TC 1.A.8.11) subfamily. In terms of tissue distribution, widely expressed. Expressed in roots, above ground and in flower buds.

It localises to the cell membrane. Its function is as follows. Water channel required to facilitate the transport of water across cell membrane. Its function is impaired by Hg(2+). The chain is Aquaporin PIP1-1 (PIP1-1) from Arabidopsis thaliana (Mouse-ear cress).